Consider the following 68-residue polypeptide: Large ribosomal subunit protein bL33c (68 aa).

It belongs to the bacterial ribosomal protein bL33 family.

It is found in the plastid. Its subcellular location is the chloroplast. The chain is Large ribosomal subunit protein bL33c from Nymphaea alba (White water-lily).